A 301-amino-acid polypeptide reads, in one-letter code: G-protein coupled receptor homolog U51 (301 aa).

The Extracellular segment spans residues 1–15 (MEKETKSLAWPATAE). The helical transmembrane segment at 16–36 (FYGWVFIFSSIQLCTVVFLTV) threads the bilayer. The Cytoplasmic segment spans residues 37-48 (RFNGFKVGREYA). A helical transmembrane segment spans residues 49-69 (VFTFAGMSFNCFLLPIKMGLL). The Extracellular segment spans residues 70-82 (SGHWTLPRDFCAI). A helical membrane pass occupies residues 83-103 (LLYIDDFSAYFSSWSLVFMAI). At 104–122 (ERINYFCYSTPLLNENSKA) the chain is on the cytoplasmic side. The helical transmembrane segment at 123–143 (LAKVCFPIVWVVSGVQALQML) threads the bilayer. Topologically, residues 144-168 (NNYKATALQNETGQCFLAFLRSGHD) are extracellular. A glycan (N-linked (GlcNAc...) asparagine; by host) is linked at N153. The helical transmembrane segment at 169–189 (MWLMLVYSVVIPVMLVFFYLY) threads the bilayer. Residues 190–199 (SKNFMLLKDE) lie on the Cytoplasmic side of the membrane. The chain crosses the membrane as a helical span at residues 200-220 (LSSVTTYLCIYLLLGTIAHLP). Residues 221–238 (KAALSEIESDKIFYGLRD) lie on the Extracellular side of the membrane. The helical transmembrane segment at 239-259 (IFMALPVLKVYYISAMAYCMA) threads the bilayer. At 260–301 (CDDHTVPVRLCSIWLVNLCKKCFSCTRREKGSDLEVGIKMLK) the chain is on the cytoplasmic side.

It belongs to the G-protein coupled receptor 1 family.

Its subcellular location is the host cell membrane. This Homo sapiens (Human) protein is G-protein coupled receptor homolog U51 (U51).